The following is a 460-amino-acid chain: Protein king tubby (460 aa).

2 disordered regions span residues 75–97 and 115–208; these read NGSPGGINPVAMNTSRNHSNNMR and HELE…EGDV. A compositionally biased stretch (polar residues) spans 85-97; sequence AMNTSRNHSNNMR. Over residues 130-145 the composition is skewed to low complexity; it reads QHQQSASHSANSTQSQ. Serine 153 is subject to Phosphoserine. Over residues 194–203 the composition is skewed to gly residues; sequence NGTGNGTGGE.

It belongs to the TUB family. As to expression, detected in sensory neurons which have a ciliary structure such as the chordotonal neurons, Orco-expressing olfactory receptor neurons, labellar gustatory receptor neurons and in the femoral chordotonal organ (at protein level). In the chordotonal neurons of the Johnston's organ expressed in the proximal to distal cilia, with lower levels of expression in the distal portion (at protein level). Also detected in the salivary glands and antenna (at protein level). Expressed in photoreceptor cells (at protein level). At stage 9 expression is detected in a subset of neuroblasts. By stage 12 expression is found in both the CNS and PNS. In late-stage embryos, expression persists in the CNS and PNS with more abundant expression in the antennal-maxillary sensory neurons and in bilateral groups of cells in the brain.

The protein resides in the cytoplasm. The protein localises to the nucleus. It localises to the cell projection. Its subcellular location is the cilium membrane. It is found in the rhabdomere. Its function is as follows. Functions in regulating protein trafficking, retinal maintenance and lipid storage. Protects photoreceptor cells R1 to R6 against light-induced retinal degeneration by stimulating norpA-mediated endocytosis of the rhodopsin ninaE (Rh1). In the auditory receptor neurons, functions as a cilia trafficking regulator of various transient receptor potential (TRP) channel components including iav and nompC. Likely to deliver pre-ciliary vesicles containing membrane proteins such as iav and nompC to the intraflagellar transport complex (IFT) at the cilia base. Plays a role in the inhibition of fat storage. The protein is Protein king tubby (ktub) of Drosophila melanogaster (Fruit fly).